The chain runs to 70 residues: EASSSSDDNVCCNGCLCDRRAPPYFECVCVDTFDHCPASCNSCVCTRSNPPQCRCTDKTQGRCPVTECRS.

Disulfide bonds link C11–C68, C12–C29, C15–C63, C17–C27, C36–C43, C40–C55, and C45–C53.

It belongs to the Bowman-Birk serine protease inhibitor family.

These proteins inhibit trypsin and chymotrypsin, having 2 sites of interaction with trypsin. The site of interaction with chymotrypsin has not been determined but is not independent of the trypsin-reactive sites. The polypeptide is Bowman-Birk type proteinase inhibitor A-II (Arachis hypogaea (Peanut)).